Here is a 439-residue protein sequence, read N- to C-terminus: ATP-dependent RNA helicase SrmB (439 aa).

A Q motif motif is present at residues 4–32; sequence SQFEQFDLSPELLKALEKKGYSRPTAIQM. Residues 35-209 form the Helicase ATP-binding domain; that stretch reads IPAAMEESDV…AERLLNDPVK (175 aa). 48–55 is a binding site for ATP; sequence APTGTGKT. The DEAD box motif lies at 157 to 160; sequence DEAD. The 151-residue stretch at 237-387 folds into the Helicase C-terminal domain; it reads KLLARFIETE…GLEPRTKPPK (151 aa). Over residues 381 to 393 the composition is skewed to basic and acidic residues; sequence PRTKPPKDGEVKS. The interval 381-439 is disordered; it reads PRTKPPKDGEVKSVSKKQKARIKEKREEKKKTEAKKKVKLRHKDTKNIGKRRKPSNSNV. Basic residues-rich tracts occupy residues 394–403 and 412–439; these read VSKKQKARIK and TEAKKKVKLRHKDTKNIGKRRKPSNSNV.

Belongs to the DEAD box helicase family. SrmB subfamily. As to quaternary structure, interacts with the 50S ribosomal subunit.

Its subcellular location is the cytoplasm. It carries out the reaction ATP + H2O = ADP + phosphate + H(+). Its function is as follows. DEAD-box RNA helicase involved in the assembly of the 50S ribosomal subunit at low temperature. Exhibits RNA-stimulated ATP hydrolysis and RNA unwinding activity. This chain is ATP-dependent RNA helicase SrmB, found in Haemophilus influenzae (strain ATCC 51907 / DSM 11121 / KW20 / Rd).